The following is a 577-amino-acid chain: Multidrug transporter TPO1_2 (577 aa).

The disordered stretch occupies residues 1-63 (MSSTSSDRPY…ALSKNSTQTS (63 aa)). N-linked (GlcNAc...) asparagine glycosylation is found at asparagine 44 and asparagine 58. A run of 12 helical transmembrane segments spans residues 137 to 157 (VMLCIILCLNCISITMGSSIF), 167 to 187 (IYHVIPVVAILGITLYVLGFA), 204 to 224 (GVLVISSFGFALFNFAVATAK), 234 to 254 (FFAGFIGAAPLAVVPAAFADM), 263 to 283 (AICLFSLGVFVGPILAPVIGS), 293 to 313 (WLEYVIACFASAIFVAILFFF), 368 to 388 (PLLLIVTIYNSFVYGILYLLL), 406 to 426 (ELPYISLIIGMAICGAFIWWM), 446 to 466 (LLPMVVAGIVFPIGILWFCWT), 475 to 495 (WIVPTIAGAFTGFGLIGIFLP), 504 to 526 (YLLIAASAVAANTFMRSGFGAAF), and 541 to 561 (YAGLLLGLLAVAMIPVPLLFL).

It belongs to the major facilitator superfamily. DHA1 family. Polyamines/proton antiporter (TC 2.A.1.2.16) subfamily.

It is found in the cell membrane. In terms of biological role, multidrug resistance transporter involved in resistance to azole antifungal drugs such as the imidazoles miconazole, ketoconazole, and tioconazole; as well as the triazoles itraconazole and fluconazole. Also plays a role in the resistance to other antifungal drug families such as the polyene amphotericin B, the pyrimide analog flucytosine, the fungicide mancozeb, and the polyamine spermine. Decreases the intracellular accumulation of clotrimazole by mediating its extrusion from cells. Plays a role in biofilm formation. This chain is Multidrug transporter TPO1_2, found in Candida glabrata (strain ATCC 2001 / BCRC 20586 / JCM 3761 / NBRC 0622 / NRRL Y-65 / CBS 138) (Yeast).